The primary structure comprises 1050 residues: Isoleucine--tRNA ligase (1050 aa).

The 'HIGH' region signature appears at 45–56; that stretch reads PYPSSPIPHIGT. The 'KMSKS' region signature appears at 594–598; sequence EMHKS. Lys597 contributes to the ATP binding site.

This sequence belongs to the class-I aminoacyl-tRNA synthetase family. IleS type 2 subfamily. Monomer. Zn(2+) serves as cofactor.

The protein resides in the cytoplasm. It carries out the reaction tRNA(Ile) + L-isoleucine + ATP = L-isoleucyl-tRNA(Ile) + AMP + diphosphate. Its function is as follows. Catalyzes the attachment of isoleucine to tRNA(Ile). As IleRS can inadvertently accommodate and process structurally similar amino acids such as valine, to avoid such errors it has two additional distinct tRNA(Ile)-dependent editing activities. One activity is designated as 'pretransfer' editing and involves the hydrolysis of activated Val-AMP. The other activity is designated 'posttransfer' editing and involves deacylation of mischarged Val-tRNA(Ile). The sequence is that of Isoleucine--tRNA ligase from Sulfolobus acidocaldarius (strain ATCC 33909 / DSM 639 / JCM 8929 / NBRC 15157 / NCIMB 11770).